A 177-amino-acid polypeptide reads, in one-letter code: Acireductone dioxygenase (177 aa).

Fe(2+) is bound by residues histidine 99, histidine 101, glutamate 105, and histidine 143. Ni(2+)-binding residues include histidine 99, histidine 101, glutamate 105, and histidine 143.

The protein belongs to the acireductone dioxygenase (ARD) family. Monomer. It depends on Fe(2+) as a cofactor. Ni(2+) serves as cofactor.

The catalysed reaction is 1,2-dihydroxy-5-(methylsulfanyl)pent-1-en-3-one + O2 = 3-(methylsulfanyl)propanoate + CO + formate + 2 H(+). The enzyme catalyses 1,2-dihydroxy-5-(methylsulfanyl)pent-1-en-3-one + O2 = 4-methylsulfanyl-2-oxobutanoate + formate + 2 H(+). The protein operates within amino-acid biosynthesis; L-methionine biosynthesis via salvage pathway; L-methionine from S-methyl-5-thio-alpha-D-ribose 1-phosphate: step 5/6. Its function is as follows. Catalyzes 2 different reactions between oxygen and the acireductone 1,2-dihydroxy-3-keto-5-methylthiopentene (DHK-MTPene) depending upon the metal bound in the active site. Fe-containing acireductone dioxygenase (Fe-ARD) produces formate and 2-keto-4-methylthiobutyrate (KMTB), the alpha-ketoacid precursor of methionine in the methionine recycle pathway. Ni-containing acireductone dioxygenase (Ni-ARD) produces methylthiopropionate, carbon monoxide and formate, and does not lie on the methionine recycle pathway. The polypeptide is Acireductone dioxygenase (Leptospira borgpetersenii serovar Hardjo-bovis (strain L550)).